The primary structure comprises 754 residues: 1,4-alpha-glucan branching enzyme GlgB (754 aa).

The active-site Nucleophile is Asp431. Glu484 (proton donor) is an active-site residue.

This sequence belongs to the glycosyl hydrolase 13 family. GlgB subfamily. In terms of assembly, monomer.

The catalysed reaction is Transfers a segment of a (1-&gt;4)-alpha-D-glucan chain to a primary hydroxy group in a similar glucan chain.. The protein operates within glycan biosynthesis; glycogen biosynthesis. Catalyzes the formation of the alpha-1,6-glucosidic linkages in glycogen by scission of a 1,4-alpha-linked oligosaccharide from growing alpha-1,4-glucan chains and the subsequent attachment of the oligosaccharide to the alpha-1,6 position. This chain is 1,4-alpha-glucan branching enzyme GlgB, found in Prochlorococcus marinus (strain MIT 9515).